A 296-amino-acid polypeptide reads, in one-letter code: Polyamine aminopropyltransferase (296 aa).

The PABS domain maps to 5–238 (ELWYETLHAN…GIMTFAWATQ (234 aa)). S-methyl-5'-thioadenosine is bound at residue glutamine 33. The spermidine site is built by histidine 64 and aspartate 88. Residues glutamate 108 and 140-141 (DG) contribute to the S-methyl-5'-thioadenosine site. The active-site Proton acceptor is aspartate 158. Position 158–161 (158–161 (DCTD)) interacts with spermidine. Position 165 (proline 165) interacts with S-methyl-5'-thioadenosine.

Belongs to the spermidine/spermine synthase family. Homodimer or homotetramer.

The protein localises to the cytoplasm. It carries out the reaction S-adenosyl 3-(methylsulfanyl)propylamine + putrescine = S-methyl-5'-thioadenosine + spermidine + H(+). It functions in the pathway amine and polyamine biosynthesis; spermidine biosynthesis; spermidine from putrescine: step 1/1. Catalyzes the irreversible transfer of a propylamine group from the amino donor S-adenosylmethioninamine (decarboxy-AdoMet) to putrescine (1,4-diaminobutane) to yield spermidine. This is Polyamine aminopropyltransferase from Yersinia pseudotuberculosis serotype O:1b (strain IP 31758).